A 2040-amino-acid polypeptide reads, in one-letter code: Apolipoprotein(a) (2040 aa).

The first 19 residues, 1 to 19, serve as a signal peptide directing secretion; that stretch reads MEHKEVVLLLLLFLKSAAP. 10 consecutive Kringle domains span residues 27-105, 141-219, 255-333, 369-447, 483-561, 597-675, 711-789, 825-903, 939-1017, and 1053-1131; these read DCYH…LTQC, ECYH…LTQC, ECYH…LTRC, and DCYY…LTQC. Cystine bridges form between Cys28/Cys105, Cys49/Cys88, Cys77/Cys100, Cys142/Cys219, Cys163/Cys202, Cys191/Cys214, Cys256/Cys333, Cys277/Cys316, Cys305/Cys328, Cys370/Cys447, Cys391/Cys430, Cys419/Cys442, Cys484/Cys561, Cys505/Cys544, Cys533/Cys556, Cys598/Cys675, Cys619/Cys658, Cys647/Cys670, Cys712/Cys789, Cys733/Cys772, Cys761/Cys784, Cys826/Cys903, Cys847/Cys886, Cys875/Cys898, Cys940/Cys1017, Cys961/Cys1000, Cys989/Cys1012, Cys1054/Cys1131, Cys1075/Cys1114, and Cys1103/Cys1126. Asn61 carries N-linked (GlcNAc...) asparagine glycosylation. Asn101 carries an N-linked (GlcNAc...) asparagine glycan. N-linked (GlcNAc...) asparagine glycosylation is present at Asn215. Asn329 carries N-linked (GlcNAc...) asparagine glycosylation. N-linked (GlcNAc...) asparagine glycosylation occurs at Asn443. An N-linked (GlcNAc...) asparagine glycan is attached at Asn557. Asn671 carries an N-linked (GlcNAc...) asparagine glycan. The N-linked (GlcNAc...) asparagine glycan is linked to Asn785. Asn899 carries an N-linked (GlcNAc...) asparagine glycan. Asn1013 is a glycosylation site (N-linked (GlcNAc...) asparagine). An N-linked (GlcNAc...) asparagine glycan is attached at Asn1127. Residues 1147–1166 form a disordered region; it reads DPSTEASSEEAPTEQSPGVQ. Kringle domains lie at 1167–1245 and 1273–1351; these read DCYH…LTQC. Intrachain disulfides connect Cys1168–Cys1245, Cys1189–Cys1228, Cys1217–Cys1240, Cys1274–Cys1351, Cys1295–Cys1334, and Cys1323–Cys1346. An N-linked (GlcNAc...) asparagine glycan is attached at Asn1241. 2 N-linked (GlcNAc...) asparagine glycosylation sites follow: Asn1347 and Asn1381. The disordered stretch occupies residues 1365-1388; sequence VPVPSTELPSEEAPTENSTGVQDC. The region spanning 1387–1465 is the Kringle 13 domain; sequence DCYRGDGQSY…RWEYCNLTRC (79 aa). 3 disulfides stabilise this stretch: Cys1388-Cys1465, Cys1409-Cys1448, and Cys1437-Cys1460. A glycan (N-linked (GlcNAc...) asparagine) is linked at Asn1461. Positions 1476–1497 are disordered; it reads PTVAPVPSTEAPSEQAPPEKSP. 3 consecutive Kringle domains span residues 1501 to 1579, 1615 to 1693, and 1719 to 1799; these read DCYH…LTQC, QCYH…LTRC, and DCMF…IPLC. 10 cysteine pairs are disulfide-bonded: Cys1502–Cys1579, Cys1523–Cys1562, Cys1551–Cys1574, Cys1616–Cys1693, Cys1637–Cys1676, Cys1665–Cys1688, Cys1720–Cys1799, Cys1741–Cys1782, Cys1770–Cys1794, and Cys1846–Cys1862. N-linked (GlcNAc...) asparagine glycosylation occurs at Asn1575. Asn1689 carries an N-linked (GlcNAc...) asparagine glycan. One can recognise a Peptidase S1 domain in the interval 1820 to 2038; sequence IVGGCVAHPH…FVTWIEGMMR (219 aa). Active-site charge relay system residues include His1861 and Asp1904. 3 disulfides stabilise this stretch: Cys1938-Cys1996, Cys1968-Cys1975, and Cys1986-Cys2014. The active-site Charge relay system is Ser1990.

It belongs to the peptidase S1 family. Plasminogen subfamily. In terms of assembly, disulfide-linked to apo-B100. Binds to fibronectin and decorin. N- and O-glycosylated. The N-glycans are complex biantennary structures present in either a mono- or disialylated state. The O-glycans are mostly (80%) represented by the monosialylated core type I structure, NeuNAcalpha2-3Galbeta1-3GalNAc, with smaller amounts of disialylated and non-sialylated O-glycans also detected.

In terms of biological role, apo(a) is the main constituent of lipoprotein(a) (Lp(a)). It has serine proteinase activity and is able of autoproteolysis. Inhibits tissue-type plasminogen activator 1. Lp(a) may be a ligand for megalin/Gp 330. This Homo sapiens (Human) protein is Apolipoprotein(a) (LPA).